The chain runs to 247 residues: Probable transcriptional regulatory protein GAU_0635 (247 aa).

It belongs to the TACO1 family.

It is found in the cytoplasm. The protein is Probable transcriptional regulatory protein GAU_0635 of Gemmatimonas aurantiaca (strain DSM 14586 / JCM 11422 / NBRC 100505 / T-27).